Reading from the N-terminus, the 273-residue chain is Aegyptin (273 aa).

Positions 1–19 (MKPLVKLFLLFCLVGIVLS) are cleaved as a signal peptide. Residues 20-160 (RPMPEDEEPV…SEKNDPADTY (141 aa)) form a disordered region. The span at 24 to 62 (EDEEPVAEGGDDDASGESEGEEETTDDAGGDGGEEENEG) shows a compositional bias: acidic residues. Basic and acidic residues predominate over residues 63-86 (EEHAGDKDAGGEDTGKEENTGHDD). Acidic residues predominate over residues 87 to 145 (AGEEDAGEEDAGEEDAGEEDAGEEDAEKEEGEKEDAGDDAGSDDGEEDSTGGDEGEDNA). The segment at 137-273 (GGDEGEDNAE…IKSCVSSKGR (137 aa)) is mediates binding of host collagen. Basic and acidic residues predominate over residues 146 to 158 (EDSKGSEKNDPAD). Intrachain disulfides connect C213/C267 and C235/C245.

This sequence belongs to the aegyptin family. In terms of assembly, monomer; exhibits non-globular elongated shape in solution. In terms of tissue distribution, female saliva (at protein level). Adult female salivary gland (at protein level).

It localises to the secreted. Functionally, modulates blood feeding of female mosquitoes on vertebrate hosts. Inhibits collagen-induced platelet aggregation in the host via preventing collagen interaction with its three major ligands: glycoprotein VI, integrin alpha-2/beta-1 (ITGA2/ITGB1) and von Willebrand factor (VWF). Prevents collagen-mediated thrombus formation in the host. Binds to host collagens but not to laminin, vitronectin (VTN), fibronectin (FN1), von Willebrand factor (VWF) and fibrinogen. Influences cytokine production and populations of circulating leukocytes. In terms of biological role, (Microbial infection) Reduces replication of dengue virus type 2 at inoculation site and viremia levels on day 2 post-inoculation. Promotes production of pro-inflammatory cytokines, such as GM-CSF (CSF2), IFN-gamma (IFNG), IL5 and IL6, in the lymph nodes of mice infected with dengue virus type 2. Increases the number of circulating eosinophils in mice infected with dengue virus type 2. Decreases the number of circulating monocytes in mice infected with dengue virus type 2. The protein is Aegyptin of Aedes aegypti (Yellowfever mosquito).